A 407-amino-acid polypeptide reads, in one-letter code: Phosphopentomutase (407 aa).

Residues D10, D306, H311, D347, H348, and H359 each coordinate Mn(2+).

Belongs to the phosphopentomutase family. Requires Mn(2+) as cofactor.

It is found in the cytoplasm. It carries out the reaction 2-deoxy-alpha-D-ribose 1-phosphate = 2-deoxy-D-ribose 5-phosphate. It catalyses the reaction alpha-D-ribose 1-phosphate = D-ribose 5-phosphate. Its pathway is carbohydrate degradation; 2-deoxy-D-ribose 1-phosphate degradation; D-glyceraldehyde 3-phosphate and acetaldehyde from 2-deoxy-alpha-D-ribose 1-phosphate: step 1/2. In terms of biological role, isomerase that catalyzes the conversion of deoxy-ribose 1-phosphate (dRib-1-P) and ribose 1-phosphate (Rib-1-P) to deoxy-ribose 5-phosphate (dRib-5-P) and ribose 5-phosphate (Rib-5-P), respectively. The protein is Phosphopentomutase of Erwinia tasmaniensis (strain DSM 17950 / CFBP 7177 / CIP 109463 / NCPPB 4357 / Et1/99).